The following is a 428-amino-acid chain: Gamma-glutamyl phosphate reductase (428 aa).

Belongs to the gamma-glutamyl phosphate reductase family.

The protein localises to the cytoplasm. It catalyses the reaction L-glutamate 5-semialdehyde + phosphate + NADP(+) = L-glutamyl 5-phosphate + NADPH + H(+). The protein operates within amino-acid biosynthesis; L-proline biosynthesis; L-glutamate 5-semialdehyde from L-glutamate: step 2/2. Functionally, catalyzes the NADPH-dependent reduction of L-glutamate 5-phosphate into L-glutamate 5-semialdehyde and phosphate. The product spontaneously undergoes cyclization to form 1-pyrroline-5-carboxylate. The polypeptide is Gamma-glutamyl phosphate reductase (Zymomonas mobilis subsp. mobilis (strain ATCC 31821 / ZM4 / CP4)).